A 79-amino-acid polypeptide reads, in one-letter code: Short neurotoxin 7 (79 aa).

The first 21 residues, 1-21 (MKTLLLTLVMVTIMCLDLGYT), serve as a signal peptide directing secretion. 4 disulfides stabilise this stretch: C24–C41, C34–C59, C63–C71, and C72–C77.

This sequence belongs to the three-finger toxin family. Short-chain subfamily. Type III alpha-neurotoxin sub-subfamily. Expressed by the venom gland.

Its subcellular location is the secreted. In terms of biological role, binds with high affinity to muscle nicotinic acetylcholine receptor (nAChR) and hinders acetylcholine binding to the receptor, thereby impairing neuromuscular transmission. Competes with the binding of alpha-bungarotoxin on muscle AChR (from Torpedo) (IC(50)=0.30 uM). In vivo, causes muscle paralysis, spasms and increased respiration. The protein is Short neurotoxin 7 of Pseudonaja textilis (Eastern brown snake).